Here is a 479-residue protein sequence, read N- to C-terminus: Probable cytosol aminopeptidase (479 aa).

Residues Lys247 and Asp252 each contribute to the Mn(2+) site. Residue Lys259 is part of the active site. Mn(2+) contacts are provided by Asp270, Asp329, and Glu331. Arg333 is a catalytic residue.

The protein belongs to the peptidase M17 family. Mn(2+) is required as a cofactor.

The protein resides in the cytoplasm. The enzyme catalyses Release of an N-terminal amino acid, Xaa-|-Yaa-, in which Xaa is preferably Leu, but may be other amino acids including Pro although not Arg or Lys, and Yaa may be Pro. Amino acid amides and methyl esters are also readily hydrolyzed, but rates on arylamides are exceedingly low.. It catalyses the reaction Release of an N-terminal amino acid, preferentially leucine, but not glutamic or aspartic acids.. Its function is as follows. Presumably involved in the processing and regular turnover of intracellular proteins. Catalyzes the removal of unsubstituted N-terminal amino acids from various peptides. This Vesicomyosocius okutanii subsp. Calyptogena okutanii (strain HA) protein is Probable cytosol aminopeptidase.